A 273-amino-acid polypeptide reads, in one-letter code: NAD(P)H-hydrate epimerase (273 aa).

Positions 18–257 (ALKLDEDLIN…LLAMEYDVQE (240 aa)) constitute a YjeF N-terminal domain. 71-75 (NNGGD) provides a ligand contact to (6S)-NADPHX. K(+) contacts are provided by asparagine 72 and aspartate 146. (6S)-NADPHX is bound by residues 150 to 157 (GFSFHGGP), tyrosine 162, and aspartate 188. Serine 191 provides a ligand contact to K(+).

Belongs to the NnrE/AIBP family. It depends on K(+) as a cofactor.

It catalyses the reaction (6R)-NADHX = (6S)-NADHX. The enzyme catalyses (6R)-NADPHX = (6S)-NADPHX. Catalyzes the epimerization of the S- and R-forms of NAD(P)HX, a damaged form of NAD(P)H that is a result of enzymatic or heat-dependent hydration. This is a prerequisite for the S-specific NAD(P)H-hydrate dehydratase to allow the repair of both epimers of NAD(P)HX. The polypeptide is NAD(P)H-hydrate epimerase (Giardia intestinalis (strain ATCC 50803 / WB clone C6) (Giardia lamblia)).